A 69-amino-acid polypeptide reads, in one-letter code: uncharacterized protein (69 aa).

One can recognise a CHCH domain in the interval 6-56 (SEECTPAKKKYDACFNDWYANKFLKGDLHNRDCDELFAEYKSCLLKALKTK). 2 consecutive short sequence motifs (cx9C motif) follow at residues 9-19 (CTPAKKKYDAC) and 38-48 (CDELFAEYKSC). 2 disulfides stabilise this stretch: cysteine 9/cysteine 48 and cysteine 19/cysteine 38.

The protein belongs to the TRIAP1/MDM35 family.

This is an uncharacterized protein from Schizosaccharomyces pombe (strain 972 / ATCC 24843) (Fission yeast).